The chain runs to 410 residues: Tryptophan synthase beta chain (410 aa).

Position 104 is an N6-(pyridoxal phosphate)lysine (Lys-104).

This sequence belongs to the TrpB family. In terms of assembly, tetramer of two alpha and two beta chains. The cofactor is pyridoxal 5'-phosphate.

It catalyses the reaction (1S,2R)-1-C-(indol-3-yl)glycerol 3-phosphate + L-serine = D-glyceraldehyde 3-phosphate + L-tryptophan + H2O. Its pathway is amino-acid biosynthesis; L-tryptophan biosynthesis; L-tryptophan from chorismate: step 5/5. Its function is as follows. The beta subunit is responsible for the synthesis of L-tryptophan from indole and L-serine. The sequence is that of Tryptophan synthase beta chain from Thermosynechococcus vestitus (strain NIES-2133 / IAM M-273 / BP-1).